A 158-amino-acid polypeptide reads, in one-letter code: Sec-independent protein translocase protein TatB (158 aa).

The helical transmembrane segment at 1–21 threads the bilayer; sequence MFGISFSELLLVGLVALLVLG. Residues 73 to 158 form a disordered region; the sequence is DEARKMFAPN…HDSSLPPRAP (86 aa). Positions 80–90 are enriched in low complexity; sequence APNQPSENSPE.

Belongs to the TatB family. The Tat system comprises two distinct complexes: a TatABC complex, containing multiple copies of TatA, TatB and TatC subunits, and a separate TatA complex, containing only TatA subunits. Substrates initially bind to the TatABC complex, which probably triggers association of the separate TatA complex to form the active translocon.

The protein localises to the cell inner membrane. Its function is as follows. Part of the twin-arginine translocation (Tat) system that transports large folded proteins containing a characteristic twin-arginine motif in their signal peptide across membranes. Together with TatC, TatB is part of a receptor directly interacting with Tat signal peptides. TatB may form an oligomeric binding site that transiently accommodates folded Tat precursor proteins before their translocation. The chain is Sec-independent protein translocase protein TatB from Pseudomonas syringae pv. syringae (strain B728a).